We begin with the raw amino-acid sequence, 227 residues long: Cytochrome c oxidase subunit 2 (227 aa).

The Mitochondrial intermembrane segment spans residues 1–14 (MAYPMQLGLQDATS). The chain crosses the membrane as a helical span at residues 15-45 (PIMEELLHFHDHTLMIVFLISSLVLYIISLM). Topologically, residues 46–59 (LTTKLTHTSTMDAQ) are mitochondrial matrix. Residues 60 to 87 (EVETIWTILPAIILIMIALPSLRILYMM) form a helical membrane-spanning segment. At 88-227 (DEINNPSLTV…HFEKWSASML (140 aa)) the chain is on the mitochondrial intermembrane side. 6 residues coordinate Cu cation: H161, C196, E198, C200, H204, and M207. E198 provides a ligand contact to Mg(2+).

The protein belongs to the cytochrome c oxidase subunit 2 family. Component of the cytochrome c oxidase (complex IV, CIV), a multisubunit enzyme composed of 14 subunits. The complex is composed of a catalytic core of 3 subunits MT-CO1, MT-CO2 and MT-CO3, encoded in the mitochondrial DNA, and 11 supernumerary subunits COX4I, COX5A, COX5B, COX6A, COX6B, COX6C, COX7A, COX7B, COX7C, COX8 and NDUFA4, which are encoded in the nuclear genome. The complex exists as a monomer or a dimer and forms supercomplexes (SCs) in the inner mitochondrial membrane with NADH-ubiquinone oxidoreductase (complex I, CI) and ubiquinol-cytochrome c oxidoreductase (cytochrome b-c1 complex, complex III, CIII), resulting in different assemblies (supercomplex SCI(1)III(2)IV(1) and megacomplex MCI(2)III(2)IV(2)). Found in a complex with TMEM177, COA6, COX18, COX20, SCO1 and SCO2. Interacts with TMEM177 in a COX20-dependent manner. Interacts with COX20. Interacts with COX16. Cu cation is required as a cofactor.

It is found in the mitochondrion inner membrane. The enzyme catalyses 4 Fe(II)-[cytochrome c] + O2 + 8 H(+)(in) = 4 Fe(III)-[cytochrome c] + 2 H2O + 4 H(+)(out). Functionally, component of the cytochrome c oxidase, the last enzyme in the mitochondrial electron transport chain which drives oxidative phosphorylation. The respiratory chain contains 3 multisubunit complexes succinate dehydrogenase (complex II, CII), ubiquinol-cytochrome c oxidoreductase (cytochrome b-c1 complex, complex III, CIII) and cytochrome c oxidase (complex IV, CIV), that cooperate to transfer electrons derived from NADH and succinate to molecular oxygen, creating an electrochemical gradient over the inner membrane that drives transmembrane transport and the ATP synthase. Cytochrome c oxidase is the component of the respiratory chain that catalyzes the reduction of oxygen to water. Electrons originating from reduced cytochrome c in the intermembrane space (IMS) are transferred via the dinuclear copper A center (CU(A)) of subunit 2 and heme A of subunit 1 to the active site in subunit 1, a binuclear center (BNC) formed by heme A3 and copper B (CU(B)). The BNC reduces molecular oxygen to 2 water molecules using 4 electrons from cytochrome c in the IMS and 4 protons from the mitochondrial matrix. The sequence is that of Cytochrome c oxidase subunit 2 (MT-CO2) from Damaliscus pygargus phillipsi (Blesbok).